We begin with the raw amino-acid sequence, 388 residues long: MNLHEYQAKQLFARYGLPAPVGYACNTPREAEEAASKIGSGPWVVKCQVHAGGRGKAGGVKVVKSKEEIRAFAEHWLGKRLVTYQTDANGQPVNQILVEAATDIAKELYLGAVVDRSSRRVVFMASTEGGVEIEKVAEETPHLIHKVAIDPLAGPMPYQGRELAFKLGLEGKLVQQFTKIFMGLAKIFLERDLALIEINPLVITTQGDLICLDGKLGADGNALFRQSDLREMRDQSQEDPREAQAAQWELNYVALDGNIGCMVNGAGLAMGTMDIVKLHGGEPANFLDVGGGATKERVTEAFKIILSDDKVKAVLVNIFGGIVRCDLIADGIIGAVEEVGVNVPVVVRLEGNNAELGAKKLADSGLNIIAAKSLTDAAQQVVAAVEGK.

The region spanning 9 to 244 (KQLFARYGLP…QSQEDPREAQ (236 aa)) is the ATP-grasp domain. ATP is bound by residues Lys-46, 53–55 (GRG), Glu-99, Thr-102, and Glu-107. Mg(2+) contacts are provided by Asn-199 and Asp-213. Substrate is bound by residues Asn-264 and 321–323 (GIV).

It belongs to the succinate/malate CoA ligase beta subunit family. Heterotetramer of two alpha and two beta subunits. Mg(2+) is required as a cofactor.

It catalyses the reaction succinate + ATP + CoA = succinyl-CoA + ADP + phosphate. It carries out the reaction GTP + succinate + CoA = succinyl-CoA + GDP + phosphate. The protein operates within carbohydrate metabolism; tricarboxylic acid cycle; succinate from succinyl-CoA (ligase route): step 1/1. Succinyl-CoA synthetase functions in the citric acid cycle (TCA), coupling the hydrolysis of succinyl-CoA to the synthesis of either ATP or GTP and thus represents the only step of substrate-level phosphorylation in the TCA. The beta subunit provides nucleotide specificity of the enzyme and binds the substrate succinate, while the binding sites for coenzyme A and phosphate are found in the alpha subunit. The sequence is that of Succinate--CoA ligase [ADP-forming] subunit beta from Enterobacter sp. (strain 638).